We begin with the raw amino-acid sequence, 129 residues long: Small ribosomal subunit protein uS11 (129 aa).

It belongs to the universal ribosomal protein uS11 family. Part of the 30S ribosomal subunit. Interacts with proteins S7 and S18. Binds to IF-3.

In terms of biological role, located on the platform of the 30S subunit, it bridges several disparate RNA helices of the 16S rRNA. Forms part of the Shine-Dalgarno cleft in the 70S ribosome. This Sinorhizobium medicae (strain WSM419) (Ensifer medicae) protein is Small ribosomal subunit protein uS11.